We begin with the raw amino-acid sequence, 147 residues long: Peptide methionine sulfoxide reductase MsrB 2 (147 aa).

Positions 6–129 constitute a MsrB domain; it reads TDEEVSKLTP…NSAALRFIPR (124 aa). C118 serves as the catalytic Nucleophile.

Belongs to the MsrB Met sulfoxide reductase family.

It catalyses the reaction L-methionyl-[protein] + [thioredoxin]-disulfide + H2O = L-methionyl-(R)-S-oxide-[protein] + [thioredoxin]-dithiol. The polypeptide is Peptide methionine sulfoxide reductase MsrB 2 (msrB2) (Rhizobium meliloti (strain 1021) (Ensifer meliloti)).